Consider the following 815-residue polypeptide: Protein pygopus (815 aa).

Disordered stretches follow at residues 1 to 107 and 147 to 711; these read MTHN…QVSA and GMGG…GPMG. The Nuclear localization signal signature appears at 39-45; the sequence is PKKRRKT. A compositionally biased stretch (low complexity) spans 46 to 73; the sequence is SSAANSAAAVAAAAAAAAAANSMQQQQA. Positions 74–86 are enriched in pro residues; the sequence is PPTPQDLLPPPPM. A compositionally biased stretch (low complexity) spans 188–199; the sequence is RGMSPMHPHQMG. Composition is skewed to gly residues over residues 230-248 and 257-269; these read PMGG…GMGG and GMGG…GGPN. Residues 307 to 316 show a composition bias toward pro residues; the sequence is LGPPSGPGPG. Composition is skewed to low complexity over residues 323 to 341, 407 to 424, 444 to 478, and 495 to 545; these read GPQQ…NGQM, SNNN…NQNP, PSVS…VPTS, and GPSP…HQQH. Residues 569-580 show a composition bias toward pro residues; that stretch reads PQQPSHLGPPHP. A compositionally biased stretch (gly residues) spans 602-621; that stretch reads GGPGMHGGPAGMPPHMGGGP. A compositionally biased stretch (low complexity) spans 622 to 636; it reads NPHMMGGPHGNAGPH. The segment covering 640-656 has biased composition (gly residues); sequence GHMGGVPGPGPGPGGMN. A compositionally biased stretch (basic residues) spans 663-675; it reads MSPHHGHPHHHHN. Residues 678-711 are compositionally biased toward gly residues; it reads GGPGPNMFGGGGGGPMGPGGPMGNMGPMGGGPMG. Residues 747–805 form a PHD-type zinc finger; sequence IYPCGMCHKEVNDNDEAVFCESGCNFFFHRTCVGLTEAAFQMLNKEVFAEWCCDKCVSS.

In terms of assembly, binds to BCL9 via the PHD-type zinc finger motif, and thereby becomes part of the nuclear ARM/PAN complex. As to expression, ubiquitous throughout embryogenesis and larval development.

The protein localises to the nucleus. Its function is as follows. Involved in signal transduction through the Wnt pathway. The protein is Protein pygopus (pygo) of Drosophila melanogaster (Fruit fly).